Here is a 137-residue protein sequence, read N- to C-terminus: NADH-quinone oxidoreductase subunit A 2 (137 aa).

The next 3 membrane-spanning stretches (helical) occupy residues 12-32 (WGFAAFLLGVVGLLAFMLGVS), 66-86 (FYLVAMLFVIFDVEALFLFAW), and 95-115 (WAGLIEATIFIAILLAGLVYL).

It belongs to the complex I subunit 3 family. As to quaternary structure, NDH-1 is composed of 13 different subunits. Subunits NuoA, H, J, K, L, M, N constitute the membrane sector of the complex.

It localises to the cell inner membrane. The catalysed reaction is a quinone + NADH + 5 H(+)(in) = a quinol + NAD(+) + 4 H(+)(out). Its function is as follows. NDH-1 shuttles electrons from NADH, via FMN and iron-sulfur (Fe-S) centers, to quinones in the respiratory chain. The immediate electron acceptor for the enzyme in this species is believed to be ubiquinone. Couples the redox reaction to proton translocation (for every two electrons transferred, four hydrogen ions are translocated across the cytoplasmic membrane), and thus conserves the redox energy in a proton gradient. This Pseudomonas aeruginosa (strain ATCC 15692 / DSM 22644 / CIP 104116 / JCM 14847 / LMG 12228 / 1C / PRS 101 / PAO1) protein is NADH-quinone oxidoreductase subunit A 2.